The chain runs to 241 residues: Uridylate kinase (241 aa).

15-18 (KLSG) is a binding site for ATP. Positions 23–28 (GSEGFG) are involved in allosteric activation by GTP. Position 57 (G57) interacts with UMP. ATP-binding residues include G58 and R62. Residues D77 and 138 to 145 (TGNPFCTT) each bind UMP. ATP contacts are provided by T165, Y171, and D174.

This sequence belongs to the UMP kinase family. In terms of assembly, homohexamer.

Its subcellular location is the cytoplasm. The enzyme catalyses UMP + ATP = UDP + ADP. It participates in pyrimidine metabolism; CTP biosynthesis via de novo pathway; UDP from UMP (UMPK route): step 1/1. Its activity is regulated as follows. Allosterically activated by GTP. Inhibited by UTP. Its function is as follows. Catalyzes the reversible phosphorylation of UMP to UDP. This is Uridylate kinase from Shewanella amazonensis (strain ATCC BAA-1098 / SB2B).